The sequence spans 206 residues: Glycerol-3-phosphate acyltransferase (206 aa).

Helical transmembrane passes span 4–24 (IIGI…LLVG), 55–75 (IIVL…PILL), 78–98 (ELHP…PVFA), 112–132 (MLLV…LTTL), 137–157 (MVSL…ITIG), and 158–178 (IVEQ…FVIF).

It belongs to the PlsY family. Probably interacts with PlsX.

It localises to the cell membrane. It carries out the reaction an acyl phosphate + sn-glycerol 3-phosphate = a 1-acyl-sn-glycero-3-phosphate + phosphate. Its pathway is lipid metabolism; phospholipid metabolism. Functionally, catalyzes the transfer of an acyl group from acyl-phosphate (acyl-PO(4)) to glycerol-3-phosphate (G3P) to form lysophosphatidic acid (LPA). This enzyme utilizes acyl-phosphate as fatty acyl donor, but not acyl-CoA or acyl-ACP. This Exiguobacterium sibiricum (strain DSM 17290 / CCUG 55495 / CIP 109462 / JCM 13490 / 255-15) protein is Glycerol-3-phosphate acyltransferase.